We begin with the raw amino-acid sequence, 181 residues long: SAGA-associated factor 11 (181 aa).

The SGF11-type zinc-finger motif lies at 93 to 114 (FNCMNCGRQIVAGRFAPHLEKC). A compositionally biased stretch (basic residues) spans 116–125 (GKGRKARAKT). Positions 116–181 (GKGRKARAKT…FTVRENVKGD (66 aa)) are disordered. The segment covering 126 to 153 (TRSTTAAQNRNARRSPNPRYSPYPNSAS) has biased composition (low complexity).

The protein belongs to the SGF11 family. Component of a deubiquitination module (DUB module) formed by ENY2, SGF11, and UBP22 in Arabidopsis. Interacts directly with ENY2 and UBP22. Interacts with DDA1. Ubiquitinated in DET1-dependent manner. Ubiquitination probably leads to its subsequent proteasomal degradation.

It localises to the nucleus. The protein localises to the nucleoplasm. Its function is as follows. Component of a deubiquitination module (DUB module) that specifically deubiquinates monoubiquinated histone H2B (H2Bub). Does not seem to be a component of the TREX-2 complex. Seems to act independently of the SAGA multiprotein complex. The DUB module is responsible for the major H2Bub deubiquitinase activity in Arabidopsis. The chain is SAGA-associated factor 11 from Arabidopsis thaliana (Mouse-ear cress).